A 40-amino-acid polypeptide reads, in one-letter code: Photosystem II reaction center protein J (40 aa).

Residues 10–30 (LWIIGTVTGILVIGLIGIFFF) form a helical membrane-spanning segment.

This sequence belongs to the PsbJ family. As to quaternary structure, PSII is composed of 1 copy each of membrane proteins PsbA, PsbB, PsbC, PsbD, PsbE, PsbF, PsbH, PsbI, PsbJ, PsbK, PsbL, PsbM, PsbT, PsbX, PsbY, PsbZ, Psb30/Ycf12, at least 3 peripheral proteins of the oxygen-evolving complex and a large number of cofactors. It forms dimeric complexes.

It localises to the plastid membrane. Functionally, one of the components of the core complex of photosystem II (PSII). PSII is a light-driven water:plastoquinone oxidoreductase that uses light energy to abstract electrons from H(2)O, generating O(2) and a proton gradient subsequently used for ATP formation. It consists of a core antenna complex that captures photons, and an electron transfer chain that converts photonic excitation into a charge separation. In Cuscuta exaltata (Tall dodder), this protein is Photosystem II reaction center protein J.